Here is a 456-residue protein sequence, read N- to C-terminus: Chordin-like protein 1 (456 aa).

The signal sequence occupies residues 1–27; sequence MRKKWKMGGMKYIFSLLFFLLLEGGKT. 2 consecutive VWFC domains span residues 35-100 and 113-179; these read TYCM…PRCP and KSCE…RVCR. N-linked (GlcNAc...) asparagine glycosylation occurs at asparagine 118. Residues 179–181 carry the Cell attachment site motif; it reads RGD. Residues 202–223 form a disordered region; sequence ARHSYHRSHYDPPPSRQAGGLS. A VWFC 3 domain is found at 258–323; that stretch reads QVCVSNGKTY…IDGKCCKVCP (66 aa). N-linked (GlcNAc...) asparagine glycosylation occurs at asparagine 291.

In terms of tissue distribution, expressed in the developing cornea and in the eye anterior segment in addition to the retina. Differentially expressed in the fetal brain. There is high expression in cerebellum and neocortex. Expressed in retinal pericytes.

The protein localises to the secreted. Functionally, antagonizes the function of BMP4 by binding to it and preventing its interaction with receptors. Alters the fate commitment of neural stem cells from gliogenesis to neurogenesis. Contributes to neuronal differentiation of neural stem cells in the brain by preventing the adoption of a glial fate. May play a crucial role in dorsoventral axis formation. May play a role in embryonic bone formation. May also play an important role in regulating retinal angiogenesis through modulation of BMP4 actions in endothelial cells. Plays a role during anterior segment eye development. This Homo sapiens (Human) protein is Chordin-like protein 1 (CHRDL1).